The sequence spans 327 residues: MVAVKALLFACTLQTCVFKPCCDMAIFLIFLNAFIWSSSFALSKSAMEAAAPLFVTGSRMVLAGVVLFGLLLCKRESLRLPRPAIMPIVLLSVIGFYLTNVLEFIGLQGLSSSTACFIYGFSPFTAAFCSYVQLREVVTWKKLGGLSLGLVSYLVYLLFGGSEDVAEWGWQLGLPELLLIAATCLSSYGWTLLRKLGRRCESLSMTAINAYAMVIAGVLSLIHSAVTEVWNPVPVENPLLFLQAIGALVIFSNLICYNLFAKLLRSFSSTFLSFCNLVMPLFASFFGWLLLGESFPPGLLFAVGFMVLGCRLIYHEEFRQGYVLTSE.

The next 10 membrane-spanning stretches (helical) occupy residues 22-42 (CDMA…SFAL), 53-73 (LFVT…LLLC), 85-105 (IMPI…LEFI), 114-134 (TACF…YVQL), 143-163 (LGGL…GGSE), 165-185 (VAEW…ATCL), 202-222 (SLSM…LSLI), 240-260 (LFLQ…YNLF), 271-291 (FLSF…WLLL), and 294-314 (SFPP…RLIY). The region spanning 34 to 157 (FIWSSSFALS…LGLVSYLVYL (124 aa)) is the EamA 1 domain. The EamA 2 domain maps to 189 to 313 (GWTLLRKLGR…GFMVLGCRLI (125 aa)).

Belongs to the drug/metabolite transporter (DMT) superfamily. 10 TMS drug/metabolite exporter (DME) (TC 2.A.7.3) family.

It is found in the cell membrane. In terms of biological role, transports S-adenosylmethionine (SAM) and S-adenosylhomocysteine (SAH). Allows bacteria to acquire SAM from the eukaryotic host cell and to likely remove the toxic by-product SAH. The protein is S-adenosylmethionine/S-adenosylhomocysteine transporter of Chlamydia trachomatis serovar D (strain ATCC VR-885 / DSM 19411 / UW-3/Cx).